The primary structure comprises 316 residues: Large ribosomal subunit protein uL10 (316 aa).

The tract at residues 282 to 316 (ASAAKADEPKKEEAKKVEEEEEEEEDGFMGFGMFD) is disordered. Over residues 286–299 (KADEPKKEEAKKVE) the composition is skewed to basic and acidic residues.

It belongs to the universal ribosomal protein uL10 family. P0 forms a pentameric complex by interaction with dimers of P1 and P2. Post-translationally, phosphorylated.

In terms of biological role, ribosomal protein P0 is the functional equivalent of E.coli protein L10. This Plasmodium falciparum (isolate 7G8) protein is Large ribosomal subunit protein uL10 (RPLP0).